The sequence spans 42 residues: Beta-defensin 13 (42 aa).

3 cysteine pairs are disulfide-bonded: C9–C38, C16–C31, and C21–C39.

Belongs to the beta-defensin family. As to expression, neutrophilic granules.

It is found in the secreted. Functionally, has bactericidal activity. Active against E.coli ML35 and S.aureus 502A. The protein is Beta-defensin 13 (DEFB13) of Bos taurus (Bovine).